A 254-amino-acid polypeptide reads, in one-letter code: 3-dehydroquinate dehydratase (254 aa).

Residues 47–49 (EWR) and arginine 83 each bind 3-dehydroquinate. Histidine 144 serves as the catalytic Proton donor/acceptor. The Schiff-base intermediate with substrate role is filled by lysine 171. 3 residues coordinate 3-dehydroquinate: arginine 214, serine 233, and glutamine 237.

This sequence belongs to the type-I 3-dehydroquinase family. As to quaternary structure, homodimer.

The catalysed reaction is 3-dehydroquinate = 3-dehydroshikimate + H2O. It participates in metabolic intermediate biosynthesis; chorismate biosynthesis; chorismate from D-erythrose 4-phosphate and phosphoenolpyruvate: step 3/7. Its function is as follows. Involved in the third step of the chorismate pathway, which leads to the biosynthesis of aromatic amino acids. Catalyzes the cis-dehydration of 3-dehydroquinate (DHQ) and introduces the first double bond of the aromatic ring to yield 3-dehydroshikimate. In Clostridium botulinum (strain Eklund 17B / Type B), this protein is 3-dehydroquinate dehydratase.